Reading from the N-terminus, the 452-residue chain is Probable E3 ubiquitin-protein ligase ARI15 (452 aa).

The tract at residues 22–256 is TRIAD supradomain; sequence SRVYCGICSN…GTSGSCLAPA (235 aa). 24 residues coordinate Zn(2+): cysteine 26, cysteine 29, cysteine 54, histidine 56, cysteine 59, cysteine 62, cysteine 83, cysteine 88, cysteine 128, cysteine 133, cysteine 154, cysteine 156, cysteine 161, cysteine 164, histidine 169, cysteine 174, cysteine 208, cysteine 211, cysteine 229, cysteine 231, cysteine 236, cysteine 239, histidine 246, and cysteine 252. The segment at 26 to 88 adopts an RING-type 1 zinc-finger fold; sequence CGICSNIGDD…TAISCPDRDC (63 aa). The segment at 106–174 adopts an IBR-type zinc-finger fold; that stretch reads AMYELYILKS…MLESHRPVTC (69 aa). The RING-type 2; atypical zinc finger occupies 208–239; it reads CPHCFIPVEIDGERPWAQFLTCVCSGRFCWKC. The segment at 414–445 adopts a RanBP2-type zinc-finger fold; it reads NYGGPYWLCDRCTYGNSWFQRACKMCCDPTAS.

Belongs to the RBR family. Ariadne subfamily. Zn(2+) serves as cofactor. As to expression, ubiquitous.

It catalyses the reaction [E2 ubiquitin-conjugating enzyme]-S-ubiquitinyl-L-cysteine + [acceptor protein]-L-lysine = [E2 ubiquitin-conjugating enzyme]-L-cysteine + [acceptor protein]-N(6)-ubiquitinyl-L-lysine.. It functions in the pathway protein modification; protein ubiquitination. In terms of biological role, might act as an E3 ubiquitin-protein ligase, or as part of E3 complex, which accepts ubiquitin from specific E2 ubiquitin-conjugating enzymes and then transfers it to substrates. In Arabidopsis thaliana (Mouse-ear cress), this protein is Probable E3 ubiquitin-protein ligase ARI15 (ARI15).